The primary structure comprises 552 residues: Phosphoglucomutase (552 aa).

The active-site Phosphoserine intermediate is Ser-143. Residues Ser-143, Asp-295, Asp-297, and Asp-299 each coordinate Mg(2+).

The protein belongs to the phosphohexose mutase family. The cofactor is Mg(2+).

It catalyses the reaction alpha-D-glucose 1-phosphate = alpha-D-glucose 6-phosphate. The protein operates within glycolipid metabolism; diglucosyl-diacylglycerol biosynthesis. In terms of biological role, catalyzes the interconversion between glucose-6-phosphate and alpha-glucose-1-phosphate. This is the first step in the biosynthesis of diglucosyl-diacylglycerol (Glc2-DAG), i.e. the predominant glycolipid found in the S.aureus membrane, which is also used as a membrane anchor for lipoteichoic acid (LTA). The polypeptide is Phosphoglucomutase (pgcA) (Staphylococcus aureus (strain bovine RF122 / ET3-1)).